A 471-amino-acid chain; its full sequence is Pachytene checkpoint protein 2 homolog (471 aa).

Position 213–220 (213–220 (GPPGTGKT)) interacts with ATP.

The protein belongs to the AAA ATPase family. PCH2 subfamily.

In terms of biological role, plays a key role in chromosome recombination during meiosis. The sequence is that of Pachytene checkpoint protein 2 homolog from Oryza sativa subsp. indica (Rice).